Here is a 253-residue protein sequence, read N- to C-terminus: Large ribosomal subunit protein uL1m (253 aa).

Residues 1 to 81 (MSSLIALGKR…SIALKSNRRA (81 aa)) constitute a mitochondrion transit peptide.

It belongs to the universal ribosomal protein uL1 family. Component of the mitochondrial large ribosomal subunit (mt-LSU). Mature yeast 74S mitochondrial ribosomes consist of a small (37S) and a large (54S) subunit. The 37S small subunit contains a 15S ribosomal RNA (15S mt-rRNA) and at least 32 different proteins. The 54S large subunit contains a 21S rRNA (21S mt-rRNA) and at least 45 different proteins.

It is found in the mitochondrion. In terms of biological role, component of the mitochondrial ribosome (mitoribosome), a dedicated translation machinery responsible for the synthesis of mitochondrial genome-encoded proteins, including at least some of the essential transmembrane subunits of the mitochondrial respiratory chain. The mitoribosomes are attached to the mitochondrial inner membrane and translation products are cotranslationally integrated into the membrane. The protein is Large ribosomal subunit protein uL1m (mrpl1) of Schizosaccharomyces pombe (strain 972 / ATCC 24843) (Fission yeast).